A 341-amino-acid chain; its full sequence is Alpha-1,4-N-acetylglucosaminyltransferase (341 aa).

At 1–4 (MLKE) the chain is on the cytoplasmic side. Residues 5–25 (IYLSLSLVLVFACGLLYQLTM) form a helical; Signal-anchor for type II membrane protein membrane-spanning segment. The Lumenal segment spans residues 26–341 (RSQCFFACLP…VSKKPGTGSR (316 aa)). An N-linked (GlcNAc...) asparagine glycan is attached at asparagine 100. The short motif at 168 to 170 (DTD) is the DXD motif element.

It belongs to the glycosyltransferase 32 family.

The protein localises to the golgi apparatus membrane. It participates in protein modification; protein glycosylation. Catalyzes the transfer of N-acetylglucosamine (GlcNAc) to core 2 branched O-glycans. Necessary for the synthesis of type III mucin which is specifically produced in the stomach, duodenum, and pancreatic duct. May protect against inflammation-associated gastric adenocarcinoma. The chain is Alpha-1,4-N-acetylglucosaminyltransferase from Mus musculus (Mouse).